A 722-amino-acid polypeptide reads, in one-letter code: Zinc finger BED domain-containing protein RICESLEEPER 2 (722 aa).

Residues 66-134 (RKKSLVWEHF…QEHKLALTPA (69 aa)) form a BED-type zinc finger. Residues Cys89, Cys92, His113, and His127 each coordinate Zn(2+). A disordered region spans residues 572–592 (VEQGDGNNAPASENGTQATAP). Polar residues predominate over residues 576-592 (DGNNAPASENGTQATAP). The segment at 617–702 (ELEQYLDESL…EALVCAKDWL (86 aa)) is HATC (Hobo-Ac-Tam3) domain.

As to quaternary structure, homodimer.

The protein resides in the nucleus. In terms of biological role, transposase-like protein that is essential for plant growth and development. May regulate global gene expression by recruiting other cellular factors. The sequence is that of Zinc finger BED domain-containing protein RICESLEEPER 2 from Oryza sativa subsp. japonica (Rice).